Reading from the N-terminus, the 111-residue chain is Prothymosin alpha (111 aa).

The residue at position 1 (Met-1) is an N-acetylmethionine. The tract at residues 1 to 111 is disordered; it reads MSDAAVDTSS…TKKQKTDEDD (111 aa). Position 2 is an N-acetylserine; in Prothymosin alpha, N-terminally processed (Ser-2). The residue at position 2 (Ser-2) is a Phosphoserine. Position 8 is a phosphothreonine (Thr-8). 2 positions are modified to phosphoserine: Ser-9 and Ser-10. Thr-13 and Thr-14 each carry phosphothreonine. Basic and acidic residues predominate over residues 13–31; sequence TTKDLKEKKEVVEEAENGR. Lys-15 is modified (N6-acetyllysine; alternate). N6-succinyllysine; alternate is present on Lys-15. Over residues 40 to 84 the composition is skewed to acidic residues; the sequence is ENEENGEQEADNEVDEEEEEGGEEEEEEEEGDGEEEDGDEDEEAE. The segment covering 101-111 has biased composition (basic and acidic residues); it reads DTKKQKTDEDD. Thr-102 carries the phosphothreonine modification. An N6-acetyllysine; alternate modification is found at Lys-103. Lys-103 participates in a covalent cross-link: Glycyl lysine isopeptide (Lys-Gly) (interchain with G-Cter in SUMO2); alternate. At Thr-107 the chain carries Phosphothreonine.

The protein belongs to the pro/parathymosin family. Interacts with NUPR1; regulates apoptotic process. Post-translationally, covalently linked to a small RNA of about 20 nucleotides.

It is found in the nucleus. Functionally, prothymosin alpha may mediate immune function by conferring resistance to certain opportunistic infections. The protein is Prothymosin alpha (PTMA) of Homo sapiens (Human).